Reading from the N-terminus, the 354-residue chain is Molybdenum import ATP-binding protein ModC (354 aa).

An ABC transporter domain is found at 1-229 (MLELDFEQQL…SALRLWLQKE (229 aa)). Residue 31–38 (GLSGAGKT) participates in ATP binding. The region spanning 289 to 354 (GSSIRNILAV…IKSVSFHRQL (66 aa)) is the Mop domain.

It belongs to the ABC transporter superfamily. Molybdate importer (TC 3.A.1.8) family. In terms of assembly, the complex is composed of two ATP-binding proteins (ModC), two transmembrane proteins (ModB) and a solute-binding protein (ModA).

The protein resides in the cell inner membrane. It catalyses the reaction molybdate(out) + ATP + H2O = molybdate(in) + ADP + phosphate + H(+). Part of the ABC transporter complex ModABC involved in molybdenum import. Responsible for energy coupling to the transport system. This Photorhabdus laumondii subsp. laumondii (strain DSM 15139 / CIP 105565 / TT01) (Photorhabdus luminescens subsp. laumondii) protein is Molybdenum import ATP-binding protein ModC.